A 123-amino-acid polypeptide reads, in one-letter code: Small ribosomal subunit protein uS12cz/uS12cy (123 aa).

The protein belongs to the universal ribosomal protein uS12 family. As to quaternary structure, part of the 30S ribosomal subunit.

It localises to the plastid. Its subcellular location is the chloroplast. In terms of biological role, with S4 and S5 plays an important role in translational accuracy. Located at the interface of the 30S and 50S subunits. The sequence is that of Small ribosomal subunit protein uS12cz/uS12cy (rps12-A) from Platanus occidentalis (Sycamore).